The chain runs to 217 residues: Peptide methionine sulfoxide reductase MsrA (217 aa).

Cys-56 is a catalytic residue.

This sequence belongs to the MsrA Met sulfoxide reductase family.

The enzyme catalyses L-methionyl-[protein] + [thioredoxin]-disulfide + H2O = L-methionyl-(S)-S-oxide-[protein] + [thioredoxin]-dithiol. It carries out the reaction [thioredoxin]-disulfide + L-methionine + H2O = L-methionine (S)-S-oxide + [thioredoxin]-dithiol. Has an important function as a repair enzyme for proteins that have been inactivated by oxidation. Catalyzes the reversible oxidation-reduction of methionine sulfoxide in proteins to methionine. This Corynebacterium glutamicum (strain ATCC 13032 / DSM 20300 / JCM 1318 / BCRC 11384 / CCUG 27702 / LMG 3730 / NBRC 12168 / NCIMB 10025 / NRRL B-2784 / 534) protein is Peptide methionine sulfoxide reductase MsrA.